Reading from the N-terminus, the 74-residue chain is Cytochrome b (74 aa).

The helical transmembrane segment at 34 to 54 (FGSLLAICLVTQILTGLLLAM) threads the bilayer.

Belongs to the cytochrome b family. In terms of assembly, the cytochrome bc1 complex contains 11 subunits: 3 respiratory subunits (MT-CYB, CYC1 and UQCRFS1), 2 core proteins (UQCRC1 and UQCRC2) and 6 low-molecular weight proteins (UQCRH/QCR6, UQCRB/QCR7, UQCRQ/QCR8, UQCR10/QCR9, UQCR11/QCR10 and a cleavage product of UQCRFS1). This cytochrome bc1 complex then forms a dimer. Heme serves as cofactor.

It is found in the mitochondrion inner membrane. Its function is as follows. Component of the ubiquinol-cytochrome c reductase complex (complex III or cytochrome b-c1 complex) that is part of the mitochondrial respiratory chain. The b-c1 complex mediates electron transfer from ubiquinol to cytochrome c. Contributes to the generation of a proton gradient across the mitochondrial membrane that is then used for ATP synthesis. This Anser caerulescens (Snow goose) protein is Cytochrome b (MT-CYB).